We begin with the raw amino-acid sequence, 482 residues long: Ribosomal RNA small subunit methyltransferase F (482 aa).

S-adenosyl-L-methionine is bound by residues 119–125 (ASAPGSK), Glu-143, Asp-170, and Asp-188. Catalysis depends on Cys-241, which acts as the Nucleophile.

This sequence belongs to the class I-like SAM-binding methyltransferase superfamily. RsmB/NOP family.

The protein localises to the cytoplasm. The enzyme catalyses cytidine(1407) in 16S rRNA + S-adenosyl-L-methionine = 5-methylcytidine(1407) in 16S rRNA + S-adenosyl-L-homocysteine + H(+). Functionally, specifically methylates the cytosine at position 1407 (m5C1407) of 16S rRNA. This is Ribosomal RNA small subunit methyltransferase F from Shewanella sp. (strain ANA-3).